A 432-amino-acid polypeptide reads, in one-letter code: Enolase (432 aa).

(2R)-2-phosphoglycerate is bound at residue glutamine 167. Residue glutamate 209 is the Proton donor of the active site. Residues aspartate 246, glutamate 291, and aspartate 318 each coordinate Mg(2+). (2R)-2-phosphoglycerate contacts are provided by lysine 343, arginine 372, serine 373, and lysine 394. The active-site Proton acceptor is the lysine 343.

It belongs to the enolase family. As to quaternary structure, component of the RNA degradosome, a multiprotein complex involved in RNA processing and mRNA degradation. It depends on Mg(2+) as a cofactor.

Its subcellular location is the cytoplasm. The protein localises to the secreted. It is found in the cell surface. It catalyses the reaction (2R)-2-phosphoglycerate = phosphoenolpyruvate + H2O. Its pathway is carbohydrate degradation; glycolysis; pyruvate from D-glyceraldehyde 3-phosphate: step 4/5. Its function is as follows. Catalyzes the reversible conversion of 2-phosphoglycerate (2-PG) into phosphoenolpyruvate (PEP). It is essential for the degradation of carbohydrates via glycolysis. The sequence is that of Enolase from Aliivibrio salmonicida (strain LFI1238) (Vibrio salmonicida (strain LFI1238)).